The chain runs to 353 residues: Putative glycosyltransferase TagX (353 aa).

Belongs to the glycosyltransferase 2 family.

The polypeptide is Putative glycosyltransferase TagX (tagX) (Staphylococcus aureus (strain Mu50 / ATCC 700699)).